Here is a 457-residue protein sequence, read N- to C-terminus: Multidrug resistance protein MdtK (457 aa).

Transmembrane regions (helical) follow at residues 11 to 31, 46 to 66, 93 to 113, 127 to 147, 160 to 180, 188 to 208, 243 to 263, 283 to 301, 316 to 336, 357 to 377, 387 to 407, and 418 to 438; these read LLAL…MGVV, AVAV…GLLL, WLAL…DHVI, AVGF…FQVL, GMVI…IFIY, LGGV…FLMM, LPVA…ALLV, LMFM…RVGF, YTSM…TIVF, LMLL…GSGV, IFFI…YLLG, and PAGF…LMVL.

It belongs to the multi antimicrobial extrusion (MATE) (TC 2.A.66.1) family. MdtK subfamily.

The protein localises to the cell inner membrane. Functionally, multidrug efflux pump that functions probably as a Na(+)/drug antiporter. This is Multidrug resistance protein MdtK from Yersinia pseudotuberculosis serotype IB (strain PB1/+).